Here is a 320-residue protein sequence, read N- to C-terminus: Taste receptor type 2 member 129 (320 aa).

Over 1–8 (MDGIVQNM) the chain is Extracellular. The helical transmembrane segment at 9-29 (FTFIVIVEIIIGWIGNGFIAL) threads the bilayer. Residues 30 to 55 (VNCIHWYKRRKISALNQILTALAFSR) are Cytoplasmic-facing. The helical transmembrane segment at 56–76 (IYLLLTVFTVIAVSTLYTHVL) threads the bilayer. Residues 77 to 88 (VTRRVVKLINFH) lie on the Extracellular side of the membrane. Residues 89-109 (LLFSNHFSMWLAACLGLYYFL) form a helical membrane-spanning segment. The Cytoplasmic segment spans residues 110-128 (KIAHFPNSIFVYLKMRINQ). Residues 129–149 (VVSGTLLMSLGLLFLNTLLIN) form a helical membrane-spanning segment. Residues 150 to 185 (SYIDTKIDDYREHLLYDFTSNNTASFYRVILVINNC) are Extracellular-facing. N-linked (GlcNAc...) asparagine glycosylation is present at Asn-170. The chain crosses the membrane as a helical span at residues 186-206 (IFTSIPFTLSQSTFLLLIFSL). The Cytoplasmic segment spans residues 207–233 (WRHYKKMQQHAQRCRDVLADAHIRVLQ). The chain crosses the membrane as a helical span at residues 234 to 254 (TMVTYVLLCAIFFLSLSMQIL). Topologically, residues 255 to 264 (RSELLKNILY) are extracellular. Residues 265–285 (VRFCEIVAAVFPSGHSCVLIC) traverse the membrane as a helical segment. Residues 286 to 320 (RDTNLRGTFLSVLSWLKQRFTSWIPNINCRSSCIF) lie on the Cytoplasmic side of the membrane.

The protein belongs to the G-protein coupled receptor T2R family.

It localises to the membrane. Its function is as follows. Putative taste receptor which may play a role in the perception of bitterness. This chain is Taste receptor type 2 member 129, found in Mus musculus (Mouse).